We begin with the raw amino-acid sequence, 1943 residues long: Cadherin-86C (1943 aa).

Positions 1–102 (MASTSSSQPE…QNQQMQHHWP (102 aa)) are disordered. The Extracellular segment spans residues 1–934 (MASTSSSQPE…TDTQYKAENK (934 aa)). An N-linked (GlcNAc...) asparagine glycan is attached at Asn12. The segment covering 50–89 (PHHHHHHHHQHHHHHRLKQHHRHHHHHHRLQHHHHHHQQQ) has biased composition (basic residues). Residues 90 to 100 (HNHQNQQMQHH) show a composition bias toward low complexity. 5 Cadherin domains span residues 238–366 (CSIT…PPVF), 367–483 (TSAP…PPYF), 484–600 (ENDH…APVF), 601–708 (EQPA…TPIF), and 709–832 (DKDL…SVKF). 7 N-linked (GlcNAc...) asparagine glycosylation sites follow: Asn244, Asn419, Asn531, Asn579, Asn585, Asn612, and Asn645. An N-linked (GlcNAc...) asparagine glycan is attached at Asn912. A helical transmembrane segment spans residues 935-955 (VLFWLLILLATLVALTILILL). Residues 956–1943 (LCCICSWCPL…NSGGESPQYS (988 aa)) are Cytoplasmic-facing. Disordered regions lie at residues 1038 to 1058 (DVGRGQDIGEGDRRHIQSAEE), 1390 to 1442 (KPSR…RKRI), 1458 to 1516 (EEEE…SHNR), 1546 to 1695 (YKHS…ERNV), and 1707 to 1895 (KSSV…DDHD). Over residues 1047–1058 (EGDRRHIQSAEE) the composition is skewed to basic and acidic residues. The span at 1426–1442 (IKRRRTKKRPRQPRKRI) shows a compositional bias: basic residues. 2 stretches are compositionally biased toward basic and acidic residues: residues 1486–1497 (QLSDESRKDQSR) and 1507–1516 (HRSESDSHNR). Residues 1552–1568 (DFDEDDTEYSIDSDGDE) are compositionally biased toward acidic residues. Residues 1580 to 1602 (QENERYRRQERTYAEPENPVDRK) are compositionally biased toward basic and acidic residues. Over residues 1633–1667 (KQTSSEPPHNRVSISKYESTVTENGRKLMSTSTEI) the composition is skewed to polar residues. The segment covering 1709–1724 (SVSGRTSTESSKSQPS) has biased composition (low complexity). Basic and acidic residues-rich tracts occupy residues 1754 to 1764 (TGGRYKPEPAP), 1774 to 1793 (LLKEDRALNKQHKPKIETDT), 1800 to 1810 (HSEHRFERENA), and 1837 to 1863 (KESKSGRESKTSKEAKPKPSPIRENEV). Polar residues predominate over residues 1879–1889 (HPTQKQLNAST).

In terms of tissue distribution, as cell intercalation proceeds, a row of stigmatophore cells surrounding the spiracular chamber show expression of Cad86C. Expression is regulated by the Abd-B cascade, requiring sal. Expressed in a broad region of the morphogenetic furrow and in clusters of cells posterior to the morphogenetic furrow. Weakly expressed in the epithelium of wing imaginal disks. In eye imaginal disk cells within the morphogenetic furrow, expression is localized to the apical region.

Its subcellular location is the cell membrane. Its function is as follows. Cadherins are calcium-dependent cell adhesion proteins. They preferentially interact with themselves in a homophilic manner in connecting cells. This chain is Cadherin-86C (Cad86C), found in Drosophila melanogaster (Fruit fly).